The following is a 98-amino-acid chain: Peptides MS9.1 (98 aa).

Residues 1–21 form the signal peptide; that stretch reads MKQSLILAVLCLALVFATIEA. A propeptide spanning residues 22-27 is cleaved from the precursor; it reads KPKADP. 2 cysteine pairs are disulfide-bonded: Cys34-Cys46 and Cys37-Cys52. 2 consecutive propeptides follow at residues 63-64 and 92-98; these read DP and DPVRDAE.

This sequence belongs to the sea anemone BBH family.

Its subcellular location is the secreted. It is found in the nematocyst. Functionally, acts as a positive modulator of mammalian TRPA1, a non-selective cation channel involved in detection of pain, in vitro yet has an analgesic and anti-inflammatory effect in vivo. The protein is Peptides MS9.1 of Metridium senile (Brown sea anemone).